The chain runs to 538 residues: Putative outer membrane porin BglH (538 aa).

Positions 1 to 25 are cleaved as a signal peptide; it reads MFRRNIITSAILLMAPLAFSAQSLA.

It belongs to the porin LamB (TC 1.B.3) family.

The protein resides in the cell outer membrane. In terms of biological role, may be a sugar porin with a broad carbohydrate specificity. The polypeptide is Putative outer membrane porin BglH (bglH) (Escherichia coli O6:K15:H31 (strain 536 / UPEC)).